The primary structure comprises 298 residues: Oxygen-dependent coproporphyrinogen-III oxidase (298 aa).

Position 92 (S92) interacts with substrate. A divalent metal cation is bound by residues H96 and H106. The Proton donor role is filled by H106. Substrate is bound at residue 108-110 (NVR). Residues H145 and H175 each contribute to the a divalent metal cation site. The tract at residues 239–274 (YVEFNLVYDRGTLFGLQSGGRSESILMSLPPRVRWE) is important for dimerization. 257–259 (GGR) is a substrate binding site.

The protein belongs to the aerobic coproporphyrinogen-III oxidase family. In terms of assembly, homodimer. Requires a divalent metal cation as cofactor.

It localises to the cytoplasm. It catalyses the reaction coproporphyrinogen III + O2 + 2 H(+) = protoporphyrinogen IX + 2 CO2 + 2 H2O. Its pathway is porphyrin-containing compound metabolism; protoporphyrin-IX biosynthesis; protoporphyrinogen-IX from coproporphyrinogen-III (O2 route): step 1/1. Involved in the heme biosynthesis. Catalyzes the aerobic oxidative decarboxylation of propionate groups of rings A and B of coproporphyrinogen-III to yield the vinyl groups in protoporphyrinogen-IX. The chain is Oxygen-dependent coproporphyrinogen-III oxidase from Stenotrophomonas maltophilia (strain K279a).